A 319-amino-acid polypeptide reads, in one-letter code: Na(+)-translocating NADH-quinone reductase subunit C (319 aa).

The helical transmembrane segment at tryptophan 14–valine 34 threads the bilayer. Threonine 283 bears the FMN phosphoryl threonine mark.

It belongs to the NqrC family. As to quaternary structure, composed of six subunits; NqrA, NqrB, NqrC, NqrD, NqrE and NqrF. FMN serves as cofactor.

It is found in the cell inner membrane. The catalysed reaction is a ubiquinone + n Na(+)(in) + NADH + H(+) = a ubiquinol + n Na(+)(out) + NAD(+). NQR complex catalyzes the reduction of ubiquinone-1 to ubiquinol by two successive reactions, coupled with the transport of Na(+) ions from the cytoplasm to the periplasm. NqrA to NqrE are probably involved in the second step, the conversion of ubisemiquinone to ubiquinol. This Chlamydia caviae (strain ATCC VR-813 / DSM 19441 / 03DC25 / GPIC) (Chlamydophila caviae) protein is Na(+)-translocating NADH-quinone reductase subunit C.